The sequence spans 688 residues: UvrABC system protein C (688 aa).

Over residues 1-14 (MSPLDQKNKPRGGA) the composition is skewed to basic and acidic residues. The disordered stretch occupies residues 1 to 20 (MSPLDQKNKPRGGADDLPPE). In terms of domain architecture, GIY-YIG spans 71-149 (NAPGVYRMMN…IKRLRPRFNV (79 aa)). The 36-residue stretch at 259-294 (QKVKTEISAAMQQASEDLDFERAAIYRDRLAALSHV) folds into the UVR domain.

The protein belongs to the UvrC family. Interacts with UvrB in an incision complex.

It is found in the cytoplasm. In terms of biological role, the UvrABC repair system catalyzes the recognition and processing of DNA lesions. UvrC both incises the 5' and 3' sides of the lesion. The N-terminal half is responsible for the 3' incision and the C-terminal half is responsible for the 5' incision. The protein is UvrABC system protein C of Mesorhizobium japonicum (strain LMG 29417 / CECT 9101 / MAFF 303099) (Mesorhizobium loti (strain MAFF 303099)).